The chain runs to 40 residues: Cytochrome c3 hydrogenase small chain (40 aa).

Requires Fe cation as cofactor.

It catalyses the reaction 2 Fe(III)-[cytochrome c3] + H2 = 2 Fe(II)-[cytochrome c3] + 2 H(+). This is Cytochrome c3 hydrogenase small chain (hoxK) from Acidithiobacillus ferrooxidans (Thiobacillus ferrooxidans).